The primary structure comprises 556 residues: Formate--tetrahydrofolate ligase (556 aa).

An ATP-binding site is contributed by 65 to 72; that stretch reads TPAGEGKS.

This sequence belongs to the formate--tetrahydrofolate ligase family.

It catalyses the reaction (6S)-5,6,7,8-tetrahydrofolate + formate + ATP = (6R)-10-formyltetrahydrofolate + ADP + phosphate. Its pathway is one-carbon metabolism; tetrahydrofolate interconversion. The sequence is that of Formate--tetrahydrofolate ligase from Streptococcus agalactiae serotype V (strain ATCC BAA-611 / 2603 V/R).